A 388-amino-acid polypeptide reads, in one-letter code: Processive diacylglycerol beta-glucosyltransferase (388 aa).

It belongs to the glycosyltransferase 28 family. UgtP subfamily.

Its subcellular location is the cell membrane. It catalyses the reaction a 1,2-diacyl-3-O-(beta-D-glucopyranosyl)-sn-glycerol + UDP-alpha-D-glucose = a 1,2-diacyl-3-O-(beta-D-Glc-(1-&gt;6)-beta-D-Glc)-sn-glycerol + UDP + H(+). The enzyme catalyses a 1,2-diacyl-3-O-(beta-D-Glc-(1-&gt;6)-beta-D-Glc)-sn-glycerol + UDP-alpha-D-glucose = a 1,2-diacyl-3-O-(beta-D-Glc-(1-&gt;6)-beta-D-Glc-(1-&gt;6)-beta-D-Glc)-sn-glycerol + UDP + H(+). It carries out the reaction a 1,2-diacyl-sn-glycerol + UDP-alpha-D-glucose = a 1,2-diacyl-3-O-(beta-D-glucopyranosyl)-sn-glycerol + UDP + H(+). Its pathway is glycolipid metabolism; diglucosyl-diacylglycerol biosynthesis. In terms of biological role, processive glucosyltransferase involved in the biosynthesis of both the bilayer- and non-bilayer-forming membrane glucolipids. Is able to successively transfer up to three glucosyl residues to diacylglycerol (DAG), thereby catalyzing the formation of beta-monoglucosyl-DAG (3-O-(beta-D-glucopyranosyl)-1,2-diacyl-sn-glycerol), beta-diglucosyl-DAG (3-O-(beta-D-glucopyranosyl-beta-(1-&gt;6)-D-glucopyranosyl)-1,2-diacyl-sn-glycerol) and beta-triglucosyl-DAG (3-O-(beta-D-glucopyranosyl-beta-(1-&gt;6)-D-glucopyranosyl-beta-(1-&gt;6)-D-glucopyranosyl)-1,2-diacyl-sn-glycerol). Beta-diglucosyl-DAG is the predominant glycolipid found in Bacillales and is also used as a membrane anchor for lipoteichoic acid (LTA). This Bacillus cereus (strain ZK / E33L) protein is Processive diacylglycerol beta-glucosyltransferase.